We begin with the raw amino-acid sequence, 968 residues long: AP2-associated protein kinase 1 (968 aa).

An N-acetylmethionine modification is found at methionine 1. A compositionally biased stretch (basic and acidic residues) spans 1–11 (MKKFFDSRREQ). A disordered region spans residues 1–25 (MKKFFDSRREQGGSGLGSGSSGGGG). Positions 12–25 (GGSGLGSGSSGGGG) are enriched in gly residues. Phosphoserine is present on serine 14. Positions 46–315 (VTVDEVLAEG…QVSFFSFKLL (270 aa)) constitute a Protein kinase domain. ATP contacts are provided by residues 52-60 (LAEGGFAIV) and lysine 74. Catalysis depends on aspartate 176, which acts as the Proton acceptor. Position 234 is a phosphotyrosine (tyrosine 234). Serine 235 carries the phosphoserine modification. 2 disordered regions span residues 327–485 (SPIP…AQAP) and 578–640 (IQPP…AGHR). Phosphothreonine occurs at positions 354 and 389. An Omega-N-methylarginine modification is found at arginine 391. A compositionally biased stretch (pro residues) spans 437–448 (QAPPAPQQPPSA). Composition is skewed to low complexity over residues 449-472 (PAQG…LKQQ) and 578-589 (IQPPQAQPATAS). Threonine 613 carries the post-translational modification Phosphothreonine. A Phosphoserine modification is found at serine 625. Threonine 627 carries the phosphothreonine modification. Residues serine 630, serine 631, serine 644, and serine 657 each carry the phosphoserine modification. A Phosphothreonine modification is found at threonine 660. The tract at residues 671 to 708 (SLNKSKSATTTPSGSPRASQQNVYNPSEGSTWNPFDDD) is disordered. Polar residues predominate over residues 679-703 (TTTPSGSPRASQQNVYNPSEGSTWN). At tyrosine 694 the chain carries Phosphotyrosine. Phosphoserine occurs at positions 738, 853, 944, and 945. The interval 830–967 (EKADVAVESL…SLLLVDQLID (138 aa)) is clathrin-binding domain (CBD). 2 disordered regions span residues 843–862 (LEPP…ASNR) and 929–952 (PVLI…ESSL). Residues 851 to 862 (LPSQTESVASNR) show a composition bias toward polar residues. Low complexity predominate over residues 938–951 (GGHSRNSSGSSESS).

The protein belongs to the protein kinase superfamily. Ser/Thr protein kinase family. In terms of assembly, interacts (via CBD domain) with clathrin. Interacts with AP-2 complex. Interacts with NUMB. Interacts with alpha-adaptin. Interacts with EPS15. Interacts with membrane-bound activated NOTCH1 but not with the inactive full-length form of NOTCH1. Preferentially interacts with monoubiquitinated activated NOTCH1 compared to the non-ubiquitinated form. In terms of processing, autophosphorylated.

The protein resides in the cell membrane. It is found in the membrane. It localises to the clathrin-coated pit. The protein localises to the presynapse. It carries out the reaction L-seryl-[protein] + ATP = O-phospho-L-seryl-[protein] + ADP + H(+). The enzyme catalyses L-threonyl-[protein] + ATP = O-phospho-L-threonyl-[protein] + ADP + H(+). Its activity is regulated as follows. Stimulated by clathrin. Functionally, regulates clathrin-mediated endocytosis by phosphorylating the AP2M1/mu2 subunit of the adaptor protein complex 2 (AP-2) which ensures high affinity binding of AP-2 to cargo membrane proteins during the initial stages of endocytosis. Preferentially, may phosphorylate substrates on threonine residues. Regulates phosphorylation of other AP-2 subunits as well as AP-2 localization and AP-2-mediated internalization of ligand complexes. Phosphorylates NUMB and regulates its cellular localization, promoting NUMB localization to endosomes. Binds to and stabilizes the activated form of NOTCH1, increases its localization in endosomes and regulates its transcriptional activity. The protein is AP2-associated protein kinase 1 (AAK1) of Sus scrofa (Pig).